We begin with the raw amino-acid sequence, 571 residues long: Proline--tRNA ligase (571 aa).

The protein belongs to the class-II aminoacyl-tRNA synthetase family. ProS type 1 subfamily. In terms of assembly, homodimer.

It localises to the cytoplasm. The catalysed reaction is tRNA(Pro) + L-proline + ATP = L-prolyl-tRNA(Pro) + AMP + diphosphate. Its function is as follows. Catalyzes the attachment of proline to tRNA(Pro) in a two-step reaction: proline is first activated by ATP to form Pro-AMP and then transferred to the acceptor end of tRNA(Pro). As ProRS can inadvertently accommodate and process non-cognate amino acids such as alanine and cysteine, to avoid such errors it has two additional distinct editing activities against alanine. One activity is designated as 'pretransfer' editing and involves the tRNA(Pro)-independent hydrolysis of activated Ala-AMP. The other activity is designated 'posttransfer' editing and involves deacylation of mischarged Ala-tRNA(Pro). The misacylated Cys-tRNA(Pro) is not edited by ProRS. The chain is Proline--tRNA ligase from Proteus mirabilis (strain HI4320).